The sequence spans 510 residues: MFIESFKVESPNVKYTEGEIHSVYNYETTELVHESRNGTYQWIVKPKTVKYEFKTDTHVPKLGVMLVGWGGNNGSTLTGGVIANREGISWATKDKVQQANYFGSLTQASSIRVGSFNGEEIYAPFKSLLPMVNPDDVVFGGWDISNMNLADAMGRAKVLDIDLQKQLRPYMEHMVPLPGIYDPDFIAANQGSRANNVIKGTKKEQVQQIIKDMRDFKEQNKVDKVVVLWTANTERYSNVVVGLNDTAESLMASVERNEAEISPSTLYAIACVFENVPFINGSPQNTFVPGLIDLAIQRNSLIGGDDFKSGQTKMKSVLVDFLVGAGIKPTSIVSYNHLGNNDGMNLSAPQTFRSKEISKSNVVDDMVASNGILYEPGEHPDHIVVIKYVPYVGDSKRAMDEYTSEIFMGGKSTIVLHNTCEDSLLAAPIILDLVLLAELSTRIQLKAEGEGKFHSFHPVATILSYLTKAPLVPPGTPVVNALSKQRAMLENILRACVGLAPENNMILEYK.

Positions 70, 71, 72, 73, 143, 180, 190, 193, 230, 231, 232, 233, 281, 282, 306, 309, 340, 341, 342, 355, 393, 394, 422, and 423 each coordinate NAD(+).

This sequence belongs to the myo-inositol 1-phosphate synthase family. NAD(+) is required as a cofactor.

Its subcellular location is the cytoplasm. The protein localises to the cytosol. The protein resides in the nucleus. The catalysed reaction is D-glucose 6-phosphate = 1D-myo-inositol 3-phosphate. Its pathway is polyol metabolism; myo-inositol biosynthesis; myo-inositol from D-glucose 6-phosphate: step 1/2. Its function is as follows. Key enzyme in myo-inositol biosynthesis pathway that catalyzes the conversion of glucose 6-phosphate to 1-myo-inositol 1-phosphate in a NAD-dependent manner. In Sesamum indicum (Oriental sesame), this protein is Inositol-3-phosphate synthase.